The primary structure comprises 230 residues: Small ribosomal subunit protein uS3 (230 aa).

Positions 39–107 (IRKFLTEKLK…PAQINISEVR (69 aa)) constitute a KH type-2 domain.

Belongs to the universal ribosomal protein uS3 family. As to quaternary structure, part of the 30S ribosomal subunit. Forms a tight complex with proteins S10 and S14.

Binds the lower part of the 30S subunit head. Binds mRNA in the 70S ribosome, positioning it for translation. The chain is Small ribosomal subunit protein uS3 from Psychromonas ingrahamii (strain DSM 17664 / CCUG 51855 / 37).